Reading from the N-terminus, the 116-residue chain is Proline-rich protein 9 (116 aa).

In Bos taurus (Bovine), this protein is Proline-rich protein 9 (PRR9).